Reading from the N-terminus, the 261-residue chain is 22 kDa alpha-zein 8b (261 aa).

A signal peptide spans Leu-1–Ala-16.

This sequence belongs to the zein family.

Zeins are major seed storage proteins. This chain is 22 kDa alpha-zein 8b, found in Zea mays (Maize).